A 104-amino-acid polypeptide reads, in one-letter code: uncharacterized protein (104 aa).

This is an uncharacterized protein from Escherichia coli (Bacteriophage T4).